We begin with the raw amino-acid sequence, 280 residues long: MIEVTLLGTGSPIPDPNRAGPSTLVRAGGQVFLVDCGRGVLQRAAAGGVGAAGLSALLLTHLHSDHVGDLGDVLITRWISTFTPDPVPLPIIGPPGTAELVAATLNALRHDIGYRIAHHADLNAPPAVDVREHTDGPVWDRDGVSIRVAPTDHRPVAPTIGFRVEYQGASVVLAGDTVPCAGLDELAAGAGALVHTVIRKDIVATIPQQRLQDICDYHSSVEEAAATAARAGVGTLVMTHYVPALVAGQEEQWRALAAREFAGRVELGDDLHRVQVDAPS.

Positions 61, 63, 65, 66, 153, 176, and 240 each coordinate Zn(2+). Catalysis depends on aspartate 65, which acts as the Proton acceptor.

It belongs to the RNase Z family. As to quaternary structure, homodimer. It depends on Zn(2+) as a cofactor.

It catalyses the reaction Endonucleolytic cleavage of RNA, removing extra 3' nucleotides from tRNA precursor, generating 3' termini of tRNAs. A 3'-hydroxy group is left at the tRNA terminus and a 5'-phosphoryl group is left at the trailer molecule.. Its function is as follows. Zinc phosphodiesterase, which displays some tRNA 3'-processing endonuclease activity. Probably involved in tRNA maturation, by removing a 3'-trailer from precursor tRNA. This chain is Ribonuclease Z, found in Mycolicibacterium paratuberculosis (strain ATCC BAA-968 / K-10) (Mycobacterium paratuberculosis).